We begin with the raw amino-acid sequence, 239 residues long: MENQPKLNSSKEIIAFLAERFPLCFVAEGEARPLKIGIFQDIVERIQDEECLSKTQLRSALRLYTSSWRYLYGVKEGAQRVDLDGNSCGELEAEHIEHALQQLTEAKARVQAQRAEQRAKKREAENVAAGEKNERPTAKKPAPRRRANNTEGEKRQPPRPQKRPQQARKPVAKPVQAKPIQAAPIQIVDVSSLKIGQEIKVRVGKSSVDASVLEVAKDGVRVQLPSGLAMIVRAEHLQF.

The tract at residues 107–177 (KARVQAQRAE…RKPVAKPVQA (71 aa)) is disordered. Positions 115 to 137 (AEQRAKKREAENVAAGEKNERPT) are enriched in basic and acidic residues.

The protein belongs to the ProQ family.

Its subcellular location is the cytoplasm. Functionally, RNA chaperone with significant RNA binding, RNA strand exchange and RNA duplexing activities. May regulate ProP activity through an RNA-based, post-transcriptional mechanism. This is RNA chaperone ProQ from Photorhabdus laumondii subsp. laumondii (strain DSM 15139 / CIP 105565 / TT01) (Photorhabdus luminescens subsp. laumondii).